Consider the following 327-residue polypeptide: Zinc transport protein ZntB (327 aa).

Topologically, residues 1 to 273 are cytoplasmic; the sequence is MEAIKGSDVN…ARRTYTMSLM (273 aa). Residues 274–294 form a helical membrane-spanning segment; the sequence is AMVFLPSTFLTGLFGVNLGGI. Topologically, residues 295–300 are periplasmic; the sequence is PGGGWQ. A helical membrane pass occupies residues 301–321; it reads FGFSIFCILLVVLIGGVALWL. Over 322-327 the chain is Cytoplasmic; the sequence is HRSKWL.

This sequence belongs to the CorA metal ion transporter (MIT) (TC 1.A.35) family.

Its subcellular location is the cell inner membrane. It carries out the reaction Zn(2+)(out) + H(+)(out) = Zn(2+)(in) + H(+)(in). Functionally, zinc transporter. Acts as a Zn(2+):proton symporter, which likely mediates zinc ion uptake. The chain is Zinc transport protein ZntB from Escherichia coli O6:K15:H31 (strain 536 / UPEC).